A 208-amino-acid chain; its full sequence is Small ribosomal subunit protein uS4 (208 aa).

The S4 RNA-binding domain maps to 98 to 158 (GRLDNVVYRM…EKSKKQARIK (61 aa)).

The protein belongs to the universal ribosomal protein uS4 family. Part of the 30S ribosomal subunit. Contacts protein S5. The interaction surface between S4 and S5 is involved in control of translational fidelity.

Its function is as follows. One of the primary rRNA binding proteins, it binds directly to 16S rRNA where it nucleates assembly of the body of the 30S subunit. Functionally, with S5 and S12 plays an important role in translational accuracy. This chain is Small ribosomal subunit protein uS4, found in Actinobacillus pleuropneumoniae serotype 5b (strain L20).